Consider the following 259-residue polypeptide: Phosphatidylglycerol--prolipoprotein diacylglyceryl transferase (259 aa).

Transmembrane regions (helical) follow at residues leucine 12–alanine 32, isoleucine 41–alanine 61, isoleucine 80–valine 100, and valine 109–isoleucine 129. Arginine 131 contributes to the a 1,2-diacyl-sn-glycero-3-phospho-(1'-sn-glycerol) binding site. The next 3 helical transmembrane spans lie at isoleucine 167–tryptophan 187, leucine 194–isoleucine 214, and glycine 226–isoleucine 246.

The protein belongs to the Lgt family.

Its subcellular location is the cell membrane. It carries out the reaction L-cysteinyl-[prolipoprotein] + a 1,2-diacyl-sn-glycero-3-phospho-(1'-sn-glycerol) = an S-1,2-diacyl-sn-glyceryl-L-cysteinyl-[prolipoprotein] + sn-glycerol 1-phosphate + H(+). The protein operates within protein modification; lipoprotein biosynthesis (diacylglyceryl transfer). Catalyzes the transfer of the diacylglyceryl group from phosphatidylglycerol to the sulfhydryl group of the N-terminal cysteine of a prolipoprotein, the first step in the formation of mature lipoproteins. The polypeptide is Phosphatidylglycerol--prolipoprotein diacylglyceryl transferase (Streptococcus pyogenes serotype M3 (strain ATCC BAA-595 / MGAS315)).